The following is a 397-amino-acid chain: uncharacterized protein (397 aa).

This is an uncharacterized protein from Nostoc sp. (strain PCC 7120 / SAG 25.82 / UTEX 2576).